Here is a 280-residue protein sequence, read N- to C-terminus: Ribonuclease Z (280 aa).

Positions 61, 63, 65, 66, 153, 176, and 240 each coordinate Zn(2+). Asp65 acts as the Proton acceptor in catalysis.

Belongs to the RNase Z family. In terms of assembly, homodimer. Zn(2+) is required as a cofactor.

The catalysed reaction is Endonucleolytic cleavage of RNA, removing extra 3' nucleotides from tRNA precursor, generating 3' termini of tRNAs. A 3'-hydroxy group is left at the tRNA terminus and a 5'-phosphoryl group is left at the trailer molecule.. Zinc phosphodiesterase, which displays some tRNA 3'-processing endonuclease activity. Probably involved in tRNA maturation, by removing a 3'-trailer from precursor tRNA. In Mycolicibacterium paratuberculosis (strain ATCC BAA-968 / K-10) (Mycobacterium paratuberculosis), this protein is Ribonuclease Z.